Reading from the N-terminus, the 205-residue chain is Protein Nef (205 aa).

A lipid anchor (N-myristoyl glycine; by host) is attached at Gly2. Residue Ser6 is modified to Phosphoserine; by host. Positions Glu62–Asp65 are acidic; interacts with host PACS1 and PACS2; stabilizes the interaction of NEF/MHC-I with host AP1M1; necessary for MHC-I internalization. The interval Pro69–Pro78 is SH3-binding; interaction with Src family tyrosine kinases. The PxxP; stabilizes the interaction of NEF/MHC-I with host AP1M1; necessary for MHC-I internalization signature appears at Pro72–Pro75. Residues Glu108–Trp124 are mediates dimerization, Nef-PTE1 interaction. Positions Val148–Val180 are binding to ATP6V1H. The Dileucine internalization motif; necessary for CD4 internalization signature appears at Leu164–Leu165. The short motif at Asp174 to Asp175 is the Diacidic; necessary for CD4 internalization element.

This sequence belongs to the lentivirus primate group Nef protein family. As to quaternary structure, monomer; cytosolic form. Homodimer; membrane bound form. Interacts with Nef associated p21-activated kinase (PAK2); this interaction activates PAK2. Associates with the Nef-MHC-I-AP1 complex; this complex is required for MHC-I internalization. Interacts (via C-terminus) with host PI3-kinase. Interacts with host PACS1; this interaction seems to be weak. Interacts with host PACS2. Interacts with host LCK and MAPK3; these interactions inhibit the kinase activity of the latter. Interacts with host ATP6V1H; this interaction may play a role in CD4 endocytosis. Associates with the CD4-Nef-AP2 complex; this complex is required for CD4 internalization. Interacts with host AP2 subunit alpha and AP2 subunit sigma2. Interacts with TCR-zeta chain; this interaction up-regulates the Fas ligand (FasL) surface expression. Interacts with host HCK, LYN, and SRC; these interactions activate the Src family kinases. Interacts with MAP3K5; this interaction inhibits the Fas and TNFR-mediated death signals. Interacts with beta-COP and PTE1. Interacts with human RACK1; this increases Nef phosphorylation by PKC. Interacts with TP53; this interaction decreases the half-life of TP53, protecting the infected cell against p53-mediated apoptosis. The virion-associated Nef proteins are cleaved by the viral protease to release the soluble C-terminal core protein. Nef is probably cleaved concomitantly with viral structural proteins on maturation of virus particles. Post-translationally, myristoylated. In terms of processing, phosphorylated on serine residues, probably by host PKCdelta and theta.

The protein resides in the host cell membrane. It localises to the virion. It is found in the secreted. The protein localises to the host Golgi apparatus membrane. Its function is as follows. Factor of infectivity and pathogenicity, required for optimal virus replication. Alters numerous pathways of T-lymphocyte function and down-regulates immunity surface molecules in order to evade host defense and increase viral infectivity. Alters the functionality of other immunity cells, like dendritic cells, monocytes/macrophages and NK cells. In infected CD4(+) T-lymphocytes, down-regulates the surface MHC-I, mature MHC-II, CD4, CD28, CCR5 and CXCR4 molecules. Mediates internalization and degradation of host CD4 through the interaction of with the cytoplasmic tail of CD4, the recruitment of AP-2 (clathrin adapter protein complex 2), internalization through clathrin coated pits, and subsequent transport to endosomes and lysosomes for degradation. Diverts host MHC-I molecules to the trans-Golgi network-associated endosomal compartments by an endocytic pathway to finally target them for degradation. MHC-I down-regulation may involve AP-1 (clathrin adapter protein complex 1) or possibly Src family kinase-ZAP70/Syk-PI3K cascade recruited by PACS2. In consequence infected cells are masked for immune recognition by cytotoxic T-lymphocytes. Decreasing the number of immune receptors also prevents reinfection by more HIV particles (superinfection). Down-regulates host SERINC3 and SERINC5 thereby excluding these proteins from the viral particles. Virion infectivity is drastically higher when SERINC3 or SERINC5 are excluded from the viral envelope, because these host antiviral proteins impair the membrane fusion event necessary for subsequent virion penetration. In terms of biological role, bypasses host T-cell signaling by inducing a transcriptional program nearly identical to that of anti-CD3 cell activation. Interaction with TCR-zeta chain up-regulates the Fas ligand (FasL). Increasing surface FasL molecules and decreasing surface MHC-I molecules on infected CD4(+) cells send attacking cytotoxic CD8+ T-lymphocytes into apoptosis. Functionally, plays a role in optimizing the host cell environment for viral replication without causing cell death by apoptosis. Protects the infected cells from apoptosis in order to keep them alive until the next virus generation is ready to strike. Inhibits the Fas and TNFR-mediated death signals by blocking MAP3K5/ASK1. Decreases the half-life of TP53, protecting the infected cell against p53-mediated apoptosis. Inhibits the apoptotic signals regulated by the Bcl-2 family proteins through the formation of a Nef/PI3-kinase/PAK2 complex that leads to activation of PAK2 and induces phosphorylation of host BAD. Its function is as follows. Extracellular Nef protein targets CD4(+) T-lymphocytes for apoptosis by interacting with CXCR4 surface receptors. This Human immunodeficiency virus type 1 group M subtype A (isolate U455) (HIV-1) protein is Protein Nef.